The primary structure comprises 203 residues: Mpv17-like protein (203 aa).

Topologically, residues 1–12 are cytoplasmic; that stretch reads MRILIQFTKRHP. A helical transmembrane segment spans residues 13–30; it reads WLTNVTIYGSLFASADIV. Residues 31-49 lie on the Lumenal side of the membrane; that stretch reads QQKLSKSPTEPIDFKQTAK. The helical transmembrane segment at 50–69 threads the bilayer; sequence VGLVGFCFHANFNFFWLRFI. Topologically, residues 70–89 are cytoplasmic; it reads ERTFPGSAPLNVIRKVACDQ. A helical transmembrane segment spans residues 90–107; that stretch reads LMAAPITISAFYTGLSLL. The Lumenal segment spans residues 108-143; sequence DGERDVFKNLKEKFWPTYKTGVMCWTVFQTINFSVI. The chain crosses the membrane as a helical span at residues 144–166; that stretch reads PPFVRTAYIGVCAFLWTTFLCYI. The Cytoplasmic portion of the chain corresponds to 167-203; that stretch reads RNRDINEVTTRLLHAVPNIRGKMAFPQDQDDNKPADK.

This sequence belongs to the peroxisomal membrane protein PXMP2/4 family.

Its subcellular location is the peroxisome membrane. In terms of biological role, participates in reactive oxygen species metabolism by up- or down-regulation of the genes of antioxidant enzymes. Protective against the mitochondrial apoptotic cascade. The polypeptide is Mpv17-like protein (mpv17l) (Xenopus laevis (African clawed frog)).